Consider the following 332-residue polypeptide: Anthranilate phosphoribosyltransferase (332 aa).

5-phospho-alpha-D-ribose 1-diphosphate-binding positions include Gly-79, 82-83, Thr-87, 89-92, 107-115, and Ser-119; these read GD, NIST, and KHGNRGVSS. Gly-79 is a binding site for anthranilate. Residue Ser-91 participates in Mg(2+) binding. Asn-110 contacts anthranilate. Arg-165 is a binding site for anthranilate. Asp-223 and Glu-224 together coordinate Mg(2+).

The protein belongs to the anthranilate phosphoribosyltransferase family. In terms of assembly, homodimer. The cofactor is Mg(2+).

The catalysed reaction is N-(5-phospho-beta-D-ribosyl)anthranilate + diphosphate = 5-phospho-alpha-D-ribose 1-diphosphate + anthranilate. It participates in amino-acid biosynthesis; L-tryptophan biosynthesis; L-tryptophan from chorismate: step 2/5. In terms of biological role, catalyzes the transfer of the phosphoribosyl group of 5-phosphorylribose-1-pyrophosphate (PRPP) to anthranilate to yield N-(5'-phosphoribosyl)-anthranilate (PRA). The chain is Anthranilate phosphoribosyltransferase from Vibrio cholerae serotype O1 (strain ATCC 39541 / Classical Ogawa 395 / O395).